The following is a 452-amino-acid chain: NAD kinase 2, mitochondrial (452 aa).

Residues M1–A50 constitute a mitochondrion transit peptide. A disordered region spans residues R23–G52. Position 64 is an N6-acetyllysine; alternate (K64). K64 carries the N6-succinyllysine; alternate modification. S176 bears the Phosphoserine mark. K312 carries the post-translational modification N6-succinyllysine. An N6-acetyllysine; alternate modification is found at K327. Residue K327 is modified to N6-succinyllysine; alternate. The residue at position 377 (S377) is a Phosphoserine. N6-acetyllysine is present on K407.

It belongs to the NAD kinase family. In terms of assembly, homodimer.

The protein localises to the mitochondrion. The enzyme catalyses NAD(+) + ATP = ADP + NADP(+) + H(+). With respect to regulation, inhibited by NADH, NADPH and NADP(+). Its function is as follows. Mitochondrial NAD(+) kinase that phosphorylates NAD(+) to yield NADP(+). Can use both ATP or inorganic polyphosphate as the phosphoryl donor. In Mus musculus (Mouse), this protein is NAD kinase 2, mitochondrial (Nadk2).